Reading from the N-terminus, the 102-residue chain is UPF0751 protein Dhaf_1351 (102 aa).

This sequence belongs to the UPF0751 family.

In Desulfitobacterium hafniense (strain DSM 10664 / DCB-2), this protein is UPF0751 protein Dhaf_1351.